Here is a 257-residue protein sequence, read N- to C-terminus: Electron transfer flavoprotein subunit beta (257 aa).

This sequence belongs to the ETF beta-subunit/FixA family. Heterodimer of an alpha and a beta subunit. Requires FAD as cofactor. It depends on AMP as a cofactor.

In terms of biological role, the electron transfer flavoprotein serves as a specific electron acceptor for other dehydrogenases. It transfers the electrons to the main respiratory chain via ETF-ubiquinone oxidoreductase (ETF dehydrogenase). This Bacillus subtilis (strain 168) protein is Electron transfer flavoprotein subunit beta (etfB).